Here is a 408-residue protein sequence, read N- to C-terminus: UPF0761 membrane protein NMC0462 (408 aa).

6 helical membrane-spanning segments follow: residues 43–63 (LLALVPVLTVMVAVASIFPVF), 100–120 (LTAIGSVMLVVTSLMLIRTID), 139–159 (FLVYWALLTFGPLSLGVGISF), 176–196 (WSGALRTAATLTFMTLLLWGL), 210–230 (AFVGALATAFCLETARSLFTW), and 248–268 (VPFFLLWLNLLWTLVLGGAVL).

Belongs to the UPF0761 family.

It is found in the cell inner membrane. This is UPF0761 membrane protein NMC0462 from Neisseria meningitidis serogroup C / serotype 2a (strain ATCC 700532 / DSM 15464 / FAM18).